A 431-amino-acid chain; its full sequence is Adenylosuccinate synthetase (431 aa).

Residues 13–19 (GDEGKGK) and 41–43 (GHT) contribute to the GTP site. The Proton acceptor role is filled by Asp-14. 2 residues coordinate Mg(2+): Asp-14 and Gly-41. IMP-binding positions include 14–17 (DEGK), 39–42 (NAGH), Thr-130, Arg-144, Gln-225, Thr-240, and Arg-304. His-42 functions as the Proton donor in the catalytic mechanism. 300 to 306 (AVTGRPR) contacts substrate. Residues Arg-306, 332-334 (KLD), and 415-417 (STG) contribute to the GTP site.

Belongs to the adenylosuccinate synthetase family. Homodimer. Mg(2+) is required as a cofactor.

The protein resides in the cytoplasm. It catalyses the reaction IMP + L-aspartate + GTP = N(6)-(1,2-dicarboxyethyl)-AMP + GDP + phosphate + 2 H(+). It functions in the pathway purine metabolism; AMP biosynthesis via de novo pathway; AMP from IMP: step 1/2. Its function is as follows. Plays an important role in the de novo pathway of purine nucleotide biosynthesis. Catalyzes the first committed step in the biosynthesis of AMP from IMP. This Legionella pneumophila subsp. pneumophila (strain Philadelphia 1 / ATCC 33152 / DSM 7513) protein is Adenylosuccinate synthetase.